Reading from the N-terminus, the 185-residue chain is Elongation factor P (185 aa).

Belongs to the elongation factor P family.

The protein localises to the cytoplasm. It participates in protein biosynthesis; polypeptide chain elongation. Functionally, involved in peptide bond synthesis. Stimulates efficient translation and peptide-bond synthesis on native or reconstituted 70S ribosomes in vitro. Probably functions indirectly by altering the affinity of the ribosome for aminoacyl-tRNA, thus increasing their reactivity as acceptors for peptidyl transferase. This Brevibacillus brevis (strain 47 / JCM 6285 / NBRC 100599) protein is Elongation factor P.